A 160-amino-acid chain; its full sequence is Protransforming growth factor alpha (160 aa).

The signal sequence occupies residues 1–23 (MVPSAGQFALFALGILLAVCQAL). The propeptide at 24–39 (ENSTSALSADPPIAAA) is removed in mature form. Topologically, residues 24-98 (ENSTSALSAD…AVVAASQKKQ (75 aa)) are extracellular. Asparagine 25 is a glycosylation site (N-linked (GlcNAc...) asparagine). The EGF-like domain maps to 43 to 83 (HFNDCPDSHSQFCFHGTCRFLVQEDKPACVCHSGYVGARCE). 3 disulfide bridges follow: cysteine 47–cysteine 60, cysteine 55–cysteine 71, and cysteine 73–cysteine 82. A propeptide spans 90–160 (VVAASQKKQA…TACCHSETVV (71 aa)) (removed in mature form). Residues 99-124 (AITALVVVSIVALAVLIITCVLIHCC) traverse the membrane as a helical segment. Over 125–160 (QVRKHCEWCRALICRHEKPSALLKGRTACCHSETVV) the chain is Cytoplasmic. 2 S-palmitoyl cysteine lipidation sites follow: cysteine 153 and cysteine 154.

Interacts with the PDZ domains of MAGI3, SDCBP and SNTA1. The interaction with SDCBP, is required for the targeting to the cell surface. In the endoplasmic reticulum, in its immature form (i.e. with a prosegment and lacking full N-glycosylation), interacts with CNIH. In the Golgi apparatus, may form a complex with CNIH and GORASP2. Interacts (via cytoplasmic C-terminal domain) with NKD2.

It localises to the secreted. The protein localises to the extracellular space. Its subcellular location is the cell membrane. Its function is as follows. TGF alpha is a mitogenic polypeptide that is able to bind to the EGF receptor/EGFR and to act synergistically with TGF beta to promote anchorage-independent cell proliferation in soft agar. The chain is Protransforming growth factor alpha (TGFA) from Sus scrofa (Pig).